We begin with the raw amino-acid sequence, 188 residues long: UPF0200 protein YG5714_1176 (188 aa).

Residue 15-22 (GMPGSGKS) participates in ATP binding.

Belongs to the UPF0200 family.

The sequence is that of UPF0200 protein YG5714_1176 from Saccharolobus islandicus (strain Y.G.57.14 / Yellowstone #1) (Sulfolobus islandicus).